A 438-amino-acid chain; its full sequence is Enolase (438 aa).

Gln174 is a (2R)-2-phosphoglycerate binding site. Catalysis depends on Glu216, which acts as the Proton donor. Asp253, Glu297, and Asp324 together coordinate Mg(2+). Lys349, Arg378, Ser379, and Lys400 together coordinate (2R)-2-phosphoglycerate. Lys349 acts as the Proton acceptor in catalysis.

The protein belongs to the enolase family. As to quaternary structure, component of the RNA degradosome, a multiprotein complex involved in RNA processing and mRNA degradation. Requires Mg(2+) as cofactor.

It localises to the cytoplasm. The protein resides in the secreted. It is found in the cell surface. The enzyme catalyses (2R)-2-phosphoglycerate = phosphoenolpyruvate + H2O. The protein operates within carbohydrate degradation; glycolysis; pyruvate from D-glyceraldehyde 3-phosphate: step 4/5. Functionally, catalyzes the reversible conversion of 2-phosphoglycerate (2-PG) into phosphoenolpyruvate (PEP). It is essential for the degradation of carbohydrates via glycolysis. In Psychrobacter arcticus (strain DSM 17307 / VKM B-2377 / 273-4), this protein is Enolase.